Here is a 329-residue protein sequence, read N- to C-terminus: Transmembrane protein I329L (329 aa).

An N-terminal signal peptide occupies residues 1–31; it reads MLRVFIFFVFLGSGLTGRIKPQVTCKYFISE. N-linked (GlcNAc...) asparagine; by host glycans are attached at residues asparagine 32, asparagine 39, asparagine 44, asparagine 76, asparagine 82, and asparagine 101. Residues 32–239 are Extracellular-facing; sequence NNTWYKYNVT…NTERYKSCYP (208 aa). The stretch at 112-133 is one LRR repeat; the sequence is ELKFLDLRYNDLQVIDYNILRK. N-linked (GlcNAc...) asparagine; by host glycans are attached at residues asparagine 185 and asparagine 219. Cysteine 195 and cysteine 237 are joined by a disulfide. The chain crosses the membrane as a helical span at residues 240 to 260; sequence LVFISILCSCISFLFLFICLL. The Cytoplasmic segment spans residues 261-329; that stretch reads RSICKKYSCT…EKKVSCSRRK (69 aa).

Belongs to the asfivirus I329L family. In terms of processing, highly glycosylated.

It localises to the host endoplasmic reticulum membrane. It is found in the host Golgi apparatus membrane. Its function is as follows. Viral TLR3 homolog that probably prevents TLR3 dimerization and subsequent induction of IFN. Inhibits dsRNA-stimulated activation of NF-kB and IRF3. The polypeptide is Transmembrane protein I329L (Ornithodoros (relapsing fever ticks)).